Consider the following 306-residue polypeptide: Glutaminase (306 aa).

Positions 61, 111, 155, 162, 186, 238, and 256 each coordinate substrate.

The protein belongs to the glutaminase family. As to quaternary structure, homotetramer.

The enzyme catalyses L-glutamine + H2O = L-glutamate + NH4(+). The sequence is that of Glutaminase from Pseudomonas entomophila (strain L48).